The chain runs to 112 residues: Iron-sulfur cluster insertion protein ErpA (112 aa).

Residues Cys40, Cys104, and Cys106 each coordinate iron-sulfur cluster.

Belongs to the HesB/IscA family. Homodimer. Requires iron-sulfur cluster as cofactor.

Its function is as follows. Required for insertion of 4Fe-4S clusters for at least IspG. The sequence is that of Iron-sulfur cluster insertion protein ErpA from Pseudoalteromonas translucida (strain TAC 125).